Reading from the N-terminus, the 341-residue chain is Holliday junction branch migration complex subunit RuvB (341 aa).

The interval Met1 to Tyr180 is large ATPase domain (RuvB-L). Residues Leu19, Arg20, Gly61, Lys64, Thr65, Thr66, Arg170, Tyr180, and Arg217 each contribute to the ATP site. Residue Thr65 participates in Mg(2+) binding. A small ATPAse domain (RuvB-S) region spans residues Asn181–Gly251. The interval Asp254–Phe341 is head domain (RuvB-H). Residues Arg309 and Arg314 each coordinate DNA.

This sequence belongs to the RuvB family. In terms of assembly, homohexamer. Forms an RuvA(8)-RuvB(12)-Holliday junction (HJ) complex. HJ DNA is sandwiched between 2 RuvA tetramers; dsDNA enters through RuvA and exits via RuvB. An RuvB hexamer assembles on each DNA strand where it exits the tetramer. Each RuvB hexamer is contacted by two RuvA subunits (via domain III) on 2 adjacent RuvB subunits; this complex drives branch migration. In the full resolvosome a probable DNA-RuvA(4)-RuvB(12)-RuvC(2) complex forms which resolves the HJ.

It localises to the cytoplasm. The catalysed reaction is ATP + H2O = ADP + phosphate + H(+). The RuvA-RuvB-RuvC complex processes Holliday junction (HJ) DNA during genetic recombination and DNA repair, while the RuvA-RuvB complex plays an important role in the rescue of blocked DNA replication forks via replication fork reversal (RFR). RuvA specifically binds to HJ cruciform DNA, conferring on it an open structure. The RuvB hexamer acts as an ATP-dependent pump, pulling dsDNA into and through the RuvAB complex. RuvB forms 2 homohexamers on either side of HJ DNA bound by 1 or 2 RuvA tetramers; 4 subunits per hexamer contact DNA at a time. Coordinated motions by a converter formed by DNA-disengaged RuvB subunits stimulates ATP hydrolysis and nucleotide exchange. Immobilization of the converter enables RuvB to convert the ATP-contained energy into a lever motion, pulling 2 nucleotides of DNA out of the RuvA tetramer per ATP hydrolyzed, thus driving DNA branch migration. The RuvB motors rotate together with the DNA substrate, which together with the progressing nucleotide cycle form the mechanistic basis for DNA recombination by continuous HJ branch migration. Branch migration allows RuvC to scan DNA until it finds its consensus sequence, where it cleaves and resolves cruciform DNA. The chain is Holliday junction branch migration complex subunit RuvB from Leptospira interrogans serogroup Icterohaemorrhagiae serovar copenhageni (strain Fiocruz L1-130).